The chain runs to 177 residues: Preprotein translocase subunit SECE1 (177 aa).

The transit peptide at 1-38 (MSLTAQFSPPVTGITRSLRDTKPSLSNLRVFPVYTEIR) directs the protein to the chloroplast. The segment at 60-87 (RDTAGSESESEATPSPAEESGSGEDKEV) is disordered. The segment covering 64-79 (GSESESEATPSPAEES) has biased composition (low complexity). A helical membrane pass occupies residues 140–160 (VVLGVIAGSSVVLLTVNFLLA).

This sequence belongs to the SecE/SEC61-gamma family. As to quaternary structure, part of the Sec protein translocation apparatus. Interacts with SCY1 and ALB3.

Its subcellular location is the plastid. The protein resides in the chloroplast thylakoid membrane. Functionally, involved in the import/insertion pathway in the thylakoids. The signal recognition particle is not involved in the insertion of SECE1 in the thylakoid membrane. In Arabidopsis thaliana (Mouse-ear cress), this protein is Preprotein translocase subunit SECE1 (SECE1).